The sequence spans 776 residues: Disintegrin and metalloproteinase domain-containing protein 28 (776 aa).

A signal peptide spans 1-19 (MLQALLTVSLLLSPVPVSA). A propeptide spanning residues 20 to 193 (IKELPGVKKY…IARPATRLVK (174 aa)) is cleaved from the precursor. The short motif at 168–175 (STCGTDGV) is the Cysteine switch element. Position 170 (cysteine 170) interacts with Zn(2+). At 194–666 (LNDGKVQKHE…CDDSSVVFYF (473 aa)) the chain is on the extracellular side. Residues 204-400 (KYIEYYLVLD…KLSNCLFNAP (197 aa)) enclose the Peptidase M12B domain. Residues asparagine 268 and asparagine 275 are each glycosylated (N-linked (GlcNAc...) asparagine). Intrachain disulfides connect cysteine 315-cysteine 395, cysteine 355-cysteine 379, cysteine 357-cysteine 362, and cysteine 466-cysteine 486. A Zn(2+)-binding site is contributed by histidine 340. Glutamate 341 is an active-site residue. Residues histidine 344 and histidine 350 each coordinate Zn(2+). An N-linked (GlcNAc...) asparagine glycan is attached at asparagine 352. The Disintegrin domain occupies 408 to 494 (TPICGNQMVE…NCPDDRFRAN (87 aa)). Asparagine 558, asparagine 603, and asparagine 629 each carry an N-linked (GlcNAc...) asparagine glycan. The EGF-like domain occupies 626–658 (KSTNCSSKCKGHAVCDHELQCQCEEGWSPPDCD). 3 disulfides stabilise this stretch: cysteine 630-cysteine 640, cysteine 634-cysteine 646, and cysteine 648-cysteine 657. A helical transmembrane segment spans residues 667-687 (SIVVAVLFPVAVISLVVAIVI). Residues 688 to 776 (RQQSSREKQK…SSFLDSNPKA (89 aa)) lie on the Cytoplasmic side of the membrane. Over residues 691–701 (SSREKQKKDQR) the composition is skewed to basic and acidic residues. Disordered regions lie at residues 691-728 (SSRE…PQEM) and 746-776 (PASF…NPKA). Positions 709-718 (RPHKQKRKPQ) are enriched in basic residues.

It depends on Zn(2+) as a cofactor. Post-translationally, pro-domain removal and maturation may be, at least in part, autocatalytic. In terms of tissue distribution, expressed at high levels in epididymis and at lower levels in lung.

It is found in the membrane. Its function is as follows. May play a role in the adhesive and proteolytic events that occur during lymphocyte emigration or may function in ectodomain shedding of lymphocyte surface target proteins, such as FASL and CD40L. May be involved in sperm maturation. The chain is Disintegrin and metalloproteinase domain-containing protein 28 (ADAM28) from Macaca fascicularis (Crab-eating macaque).